The sequence spans 226 residues: Enolase-phosphatase E1 (226 aa).

Belongs to the HAD-like hydrolase superfamily. MasA/MtnC family. As to quaternary structure, monomer. It depends on Mg(2+) as a cofactor.

It catalyses the reaction 5-methylsulfanyl-2,3-dioxopentyl phosphate + H2O = 1,2-dihydroxy-5-(methylsulfanyl)pent-1-en-3-one + phosphate. The protein operates within amino-acid biosynthesis; L-methionine biosynthesis via salvage pathway; L-methionine from S-methyl-5-thio-alpha-D-ribose 1-phosphate: step 3/6. It functions in the pathway amino-acid biosynthesis; L-methionine biosynthesis via salvage pathway; L-methionine from S-methyl-5-thio-alpha-D-ribose 1-phosphate: step 4/6. Bifunctional enzyme that catalyzes the enolization of 2,3-diketo-5-methylthiopentyl-1-phosphate (DK-MTP-1-P) into the intermediate 2-hydroxy-3-keto-5-methylthiopentenyl-1-phosphate (HK-MTPenyl-1-P), which is then dephosphorylated to form the acireductone 1,2-dihydroxy-3-keto-5-methylthiopentene (DHK-MTPene). The protein is Enolase-phosphatase E1 of Shewanella baltica (strain OS223).